Consider the following 129-residue polypeptide: Protein GLUTAMINE DUMPER 2 (129 aa).

At 1–34 (MQTMEGRQYNYQDSINASSSMVVPHSPWHSPVPY) the chain is on the extracellular side. The helical transmembrane segment at 35 to 55 (LFGGLAAMLALICVALLILAC) threads the bilayer. Residues 56 to 129 (SYWRLSGSAE…DHNEEEGRRG (74 aa)) lie on the Cytoplasmic side of the membrane. The interval 66–89 (RDLEAGDDAKPDNDTNKTKHTEMP) is disordered. Positions 94–98 (VIMAG) match the VIMAG motif. The interval 106 to 129 (ATPATRSEQSCTCGDHNEEEGRRG) is disordered. Over residues 120-129 (DHNEEEGRRG) the composition is skewed to basic and acidic residues.

Belongs to the GLUTAMINE DUMPER 1 (TC 9.B.60) family. Expressed in the vascular tissues.

Its subcellular location is the membrane. Functionally, probable subunit of an amino acid transporter involved in the regulation of the amino acid metabolism. Stimulates amino acid export by activating nonselective amino acid facilitators. The polypeptide is Protein GLUTAMINE DUMPER 2 (GDU2) (Arabidopsis thaliana (Mouse-ear cress)).